Consider the following 377-residue polypeptide: MAKKDYYQILGIPKSAEEREIKKAYKKLAMKYHPDRNQGDKTAEGKFKEIKEAYEILINEEKRSAYDQYGHAAFENGQSNSTYSTFTNSADFSDIFGDVFGDIFGGNRTQRAKKGADLCYNMEITLEEAVKGIKKEIQIPTLQKCKTCYGSGTRTGTKPRSCSTCHGKGQIHIRKGFFTVQQSCPTCHGKGTIITDPCNLCHGQGRVETYKILSVKIPPGLDTNDRIRLNNEGEAGANGAQSGDLYVQITVKKHPIFEREGNNLYCEVPINFTMAALGGEIEVPTLDGRVKLKIPYETQSGKLFRIRGRGVKSVQNRNQGDLLCRVVVETPVNLNEQQKNLLHELGNSFHGFRGEKNSPRSKRFFDGVKRFFDDLTR.

In terms of domain architecture, J spans 5–70 (DYYQILGIPK…EKRSAYDQYG (66 aa)). The segment at 132-210 (GIKKEIQIPT…CHGQGRVETY (79 aa)) adopts a CR-type zinc-finger fold. Residues cysteine 145, cysteine 148, cysteine 162, cysteine 165, cysteine 184, cysteine 187, cysteine 198, and cysteine 201 each contribute to the Zn(2+) site. CXXCXGXG motif repeat units follow at residues 145-152 (CKTCYGSG), 162-169 (CSTCHGKG), 184-191 (CPTCHGKG), and 198-205 (CNLCHGQG).

This sequence belongs to the DnaJ family. In terms of assembly, homodimer. The cofactor is Zn(2+).

The protein localises to the cytoplasm. Participates actively in the response to hyperosmotic and heat shock by preventing the aggregation of stress-denatured proteins and by disaggregating proteins, also in an autonomous, DnaK-independent fashion. Unfolded proteins bind initially to DnaJ; upon interaction with the DnaJ-bound protein, DnaK hydrolyzes its bound ATP, resulting in the formation of a stable complex. GrpE releases ADP from DnaK; ATP binding to DnaK triggers the release of the substrate protein, thus completing the reaction cycle. Several rounds of ATP-dependent interactions between DnaJ, DnaK and GrpE are required for fully efficient folding. Also involved, together with DnaK and GrpE, in the DNA replication of plasmids through activation of initiation proteins. This is Chaperone protein DnaJ from Buchnera aphidicola subsp. Acyrthosiphon pisum (strain 5A).